The sequence spans 942 residues: Zinc finger protein 865 (942 aa).

Positions 66-106 (FASTSTSKPKEFKVEAPPSSSLSPSKKPDIATTQQFNNQPP) are disordered. Positions 96 to 106 (ATTQQFNNQPP) are enriched in polar residues. 20 consecutive C2H2-type zinc fingers follow at residues 172–194 (FPCTVCQKSFKQSSHLVQHMLVH), 200–222 (YECNTCGRTYNHISSLIRHRRCH), 282–304 (FTCTLCWKVFKKQSHLHQHQIIH), 310–332 (FSCSVCAKSFNRRESLKRHVKTH), 338–360 (VQCEVCGKSFRDTSYLLKHQATH), 367–389 (YKCELCGKSYAAPQSLLRHKQVH), 466–488 (FCCNVCGRGFGRRETLKRHERIH), 494–516 (HQCSVCGKRFRESFHLTKHHVVH), 522–544 (YKCELCGKVFGYPQSLTRHKQIH), 564–586 (FGCTDCGERFPDSFHLMNHKELH), 592–614 (YVCDTCGKCFGFIENLMWHKLVH), 678–700 (FSCSICGQSFKHFLGLVTHKYVH), 706–728 (LACNVCGQNFAGAYDLLLHRRTH), 734–756 (FTCSVCGKRFWEAALLMRHQRCH), 762–784 (YRCTICGRGFLHSWYLRQHKVVH), 790–812 (YKCALCNKRFAQSSSLAEHQRLH), 818–840 (QRCPTCGKTFRYRSNLLEHQRVH), 846–868 (YRCDQCGKSFFYISSILRHQRSH), 874–896 (LRCSCCLKLFKDPKYFSKHVQTH), and 902–924 (FKCGACGEAFSNTYGLKKHRHAH).

Belongs to the krueppel C2H2-type zinc-finger protein family.

The protein localises to the nucleus. May be involved in transcriptional regulation. This is Zinc finger protein 865 (znf865) from Xenopus tropicalis (Western clawed frog).